We begin with the raw amino-acid sequence, 72 residues long: Hypertrehalosaemic prohormone (72 aa).

The signal sequence occupies residues M1 to A21. Position 22 is a pyrrolidone carboxylic acid (Q22). Position 31 is a threonine amide (T31).

It belongs to the AKH/HRTH/RPCH family. As to expression, expressed in corpora cardiaca.

The protein localises to the secreted. Its function is as follows. Hypertrehalosaemic factors are neuropeptides that elevate the level of trehalose in the hemolymph (trehalose is the major carbohydrate in the hemolymph of insects). This Blaberus discoidalis (Tropical cockroach) protein is Hypertrehalosaemic prohormone.